Reading from the N-terminus, the 157-residue chain is 3-dehydroquinate dehydratase (157 aa).

Tyr-24 functions as the Proton acceptor in the catalytic mechanism. The substrate site is built by Asn-75, His-81, and Asp-88. Catalysis depends on His-101, which acts as the Proton donor. Substrate is bound by residues 102–103 (LS) and Arg-112.

This sequence belongs to the type-II 3-dehydroquinase family. As to quaternary structure, homododecamer.

The catalysed reaction is 3-dehydroquinate = 3-dehydroshikimate + H2O. It functions in the pathway metabolic intermediate biosynthesis; chorismate biosynthesis; chorismate from D-erythrose 4-phosphate and phosphoenolpyruvate: step 3/7. Its function is as follows. Catalyzes a trans-dehydration via an enolate intermediate. The chain is 3-dehydroquinate dehydratase from Brucella melitensis biotype 1 (strain ATCC 23456 / CCUG 17765 / NCTC 10094 / 16M).